Consider the following 281-residue polypeptide: Polyamine aminopropyltransferase (281 aa).

A PABS domain is found at 2-237; the sequence is EIWYTEKLEL…GIIGFTFLSN (236 aa). Q33 is an S-methyl-5'-thioadenosine binding site. Spermidine-binding residues include H64 and D88. S-methyl-5'-thioadenosine-binding positions include E108 and 139–140; that span reads DG. Residue D157 is the Proton acceptor of the active site. Spermidine is bound at residue 157–160; it reads DSSD. Position 164 (P164) interacts with S-methyl-5'-thioadenosine.

This sequence belongs to the spermidine/spermine synthase family. In terms of assembly, homodimer or homotetramer.

The protein resides in the cytoplasm. It catalyses the reaction S-adenosyl 3-(methylsulfanyl)propylamine + putrescine = S-methyl-5'-thioadenosine + spermidine + H(+). The protein operates within amine and polyamine biosynthesis; spermidine biosynthesis; spermidine from putrescine: step 1/1. In terms of biological role, catalyzes the irreversible transfer of a propylamine group from the amino donor S-adenosylmethioninamine (decarboxy-AdoMet) to putrescine (1,4-diaminobutane) to yield spermidine. The sequence is that of Polyamine aminopropyltransferase from Leptospira biflexa serovar Patoc (strain Patoc 1 / Ames).